We begin with the raw amino-acid sequence, 429 residues long: 4-hydroxyphenylacetate degradation bifunctional isomerase/decarboxylase (429 aa).

Approximate repeat units lie at residues 1-215 and 216-429; these read MKGT…RKSF and PTLP…ETAK. Glu-276, Glu-278, and Asp-307 together coordinate a divalent metal cation.

This sequence belongs to the FAH family. Monomer. The cofactor is Mg(2+).

It catalyses the reaction (2E,4Z)-5-hydroxypenta-2,4-diene-1,2,5-tricarboxylate = (3E,5R)-5-carboxy-2-oxohept-3-enedioate. The enzyme catalyses (3E,5R)-5-carboxy-2-oxohept-3-enedioate + H(+) = (4Z)-2-oxohept-4-enedioate + CO2. The protein operates within aromatic compound metabolism; 4-hydroxyphenylacetate degradation; pyruvate and succinate semialdehyde from 4-hydroxyphenylacetate: step 4/7. Its pathway is aromatic compound metabolism; 4-hydroxyphenylacetate degradation; pyruvate and succinate semialdehyde from 4-hydroxyphenylacetate: step 5/7. In terms of biological role, decarboxylates OPET (5-oxo-pent-3-ene-1,2,5-tricarboxylic acid) into HHDD (2-hydroxy-hept-2,4-diene-1,7-dioate) and isomerizes it to OHED (2-oxo-hept-3-ene-1,7-dioate). The polypeptide is 4-hydroxyphenylacetate degradation bifunctional isomerase/decarboxylase (hpaG) (Escherichia coli).